Consider the following 644-residue polypeptide: Subversion of eukaryotic traffic protein A (644 aa).

The glucosyltransferase stretch occupies residues 1 to 400; sequence MYKIYSYLGW…FHTLLSQVSD (400 aa). The tract at residues 401–644 is ptdIns(3)P-binding and localization domain; that stretch reads PVNPTAHELK…EYDNNHGLRI (244 aa).

In terms of processing, ubiquitinated and polyubiquitinated when ectopically produced in both yeast and mammalian cells; however it is unsure if this modification occurs during the L.pneumophila infection of host cells.

The protein localises to the secreted. Functionally, secreted effector that interferes with vesicular trafficking of host cells. Possesses glucohydrolase and mono-O-glucosyltransferase activity by using UDP-glucose as a sugar donor substrate. Is able to glucosylate histones H4 and H3.1 in vitro, but it is unlikely that histones are the natural substrates for SetA. May glycosylate a component of the host cell vesicle trafficking machinery during L.pneumophila infection. Binds with high specificity to phosphatidylinositol 3-phosphate (PtdIns(3)P), (with a dissociation constant value of 809 nM), which guides SetA to the cytosolic leaflet of the early phagosome of the host cell. The polypeptide is Subversion of eukaryotic traffic protein A (setA) (Legionella pneumophila subsp. pneumophila (strain Philadelphia 1 / ATCC 33152 / DSM 7513)).